We begin with the raw amino-acid sequence, 424 residues long: 5-methylthioadenosine/S-adenosylhomocysteine deaminase (424 aa).

Zn(2+) contacts are provided by His60 and His62. 2 residues coordinate substrate: Glu89 and His181. Position 208 (His208) interacts with Zn(2+). Positions 211 and 296 each coordinate substrate. Residue Asp296 coordinates Zn(2+).

This sequence belongs to the metallo-dependent hydrolases superfamily. MTA/SAH deaminase family. The cofactor is Zn(2+).

It carries out the reaction S-adenosyl-L-homocysteine + H2O + H(+) = S-inosyl-L-homocysteine + NH4(+). The enzyme catalyses S-methyl-5'-thioadenosine + H2O + H(+) = S-methyl-5'-thioinosine + NH4(+). Catalyzes the deamination of 5-methylthioadenosine and S-adenosyl-L-homocysteine into 5-methylthioinosine and S-inosyl-L-homocysteine, respectively. Is also able to deaminate adenosine. This is 5-methylthioadenosine/S-adenosylhomocysteine deaminase from Thermococcus kodakarensis (strain ATCC BAA-918 / JCM 12380 / KOD1) (Pyrococcus kodakaraensis (strain KOD1)).